Consider the following 32-residue polypeptide: MSDIN-like toxin proprotein 11 (32 aa).

A propeptide spanning residues 1–10 is cleaved from the precursor; the sequence is MSDINATRLP. The segment at 1–32 is disordered; the sequence is MSDINATRLPGMEPPSPMPCVGDADNFTLTRG. The cyclopeptide (Gly-Pro) cross-link spans 11–19; that stretch reads GMEPPSPMP. Residues 20–32 constitute a propeptide that is removed on maturation; sequence CVGDADNFTLTRG.

The protein belongs to the MSDIN fungal toxin family. Post-translationally, processed by the macrocyclase-peptidase enzyme POPB to yield a toxic cyclic nonapeptide. POPB first removes 10 residues from the N-terminus. Conformational trapping of the remaining peptide forces the enzyme to release this intermediate rather than proceed to macrocyclization. The enzyme rebinds the remaining peptide in a different conformation and catalyzes macrocyclization of the N-terminal 9 residues.

Probable toxin that belongs to the MSDIN-like toxin family responsible for a large number of food poisoning cases and deaths. In Amanita bisporigera (Destroying angel), this protein is MSDIN-like toxin proprotein 11.